The chain runs to 633 residues: DEAD-box ATP-dependent RNA helicase 37 (633 aa).

The tract at residues 1-110 (MSASWADVAD…WNNRSGGWDR (110 aa)) is disordered. Ser-2 carries the post-translational modification N-acetylserine. The segment covering 11–25 (SENTGSGSSNQNSHP) has biased composition (polar residues). Gly residues-rich tracts occupy residues 68–80 (GGSGVGVGGGGGY) and 87–101 (PGSGSGYGGRGGGGW). The short motif at 159–187 (NTFAEIDLGEALNLNIRRCKYVKPTPVQR) is the Q motif element. A Helicase ATP-binding domain is found at 190–374 (IPILLEGRDL…ADFLANYIFL (185 aa)). 203–210 (AQTGSGKT) lines the ATP pocket. A DEAD box motif is present at residues 318-321 (DEAD). Residues 401–552 (HLMDLLHAQR…EVPEWLTRYA (152 aa)) enclose the Helicase C-terminal domain. The disordered stretch occupies residues 555–600 (SSFGGGKNRRSGGRFGGRDFRREGSFGSGRGGYGGGGGGYGGGGGY). Gly residues predominate over residues 580–600 (FGSGRGGYGGGGGGYGGGGGY).

Belongs to the DEAD box helicase family. DDX3/DED1 subfamily.

It carries out the reaction ATP + H2O = ADP + phosphate + H(+). This chain is DEAD-box ATP-dependent RNA helicase 37 (RH37), found in Arabidopsis thaliana (Mouse-ear cress).